We begin with the raw amino-acid sequence, 217 residues long: Probable transaldolase (217 aa).

Lys83 acts as the Schiff-base intermediate with substrate in catalysis.

Belongs to the transaldolase family. Type 3B subfamily.

It is found in the cytoplasm. The catalysed reaction is D-sedoheptulose 7-phosphate + D-glyceraldehyde 3-phosphate = D-erythrose 4-phosphate + beta-D-fructose 6-phosphate. It participates in carbohydrate degradation; pentose phosphate pathway; D-glyceraldehyde 3-phosphate and beta-D-fructose 6-phosphate from D-ribose 5-phosphate and D-xylulose 5-phosphate (non-oxidative stage): step 2/3. In terms of biological role, transaldolase is important for the balance of metabolites in the pentose-phosphate pathway. This is Probable transaldolase from Caulobacter vibrioides (strain NA1000 / CB15N) (Caulobacter crescentus).